An 848-amino-acid chain; its full sequence is Coiled-coil domain-containing protein 110 (848 aa).

Residues 41–62 form a disordered region; that stretch reads SEGVKESGGNEPEYGCASEPEN. The stretch at 442–794 forms a coiled coil; sequence LQNYLKESLQ…LSDKVSSQNN (353 aa). Serine 620 is modified (phosphoserine).

The protein localises to the nucleus. The protein is Coiled-coil domain-containing protein 110 (Ccdc110) of Mus musculus (Mouse).